The sequence spans 254 residues: Trans-aconitate 2-methyltransferase (254 aa).

The protein belongs to the methyltransferase superfamily. Tam family.

It localises to the cytoplasm. The enzyme catalyses trans-aconitate + S-adenosyl-L-methionine = (E)-3-(methoxycarbonyl)pent-2-enedioate + S-adenosyl-L-homocysteine. Its function is as follows. Catalyzes the S-adenosylmethionine monomethyl esterification of trans-aconitate. The chain is Trans-aconitate 2-methyltransferase from Mycobacterium sp. (strain JLS).